The primary structure comprises 21 residues: Mast cell protease 3 (21 aa).

One can recognise a Peptidase S1 domain in the interval 1 to 21 (IIGGVESRPHSRPYMATLEIT). A disordered region spans residues 1–21 (IIGGVESRPHSRPYMATLEIT).

Belongs to the peptidase S1 family. Granzyme subfamily.

Thrombin inactivating protease. Displays chymotrypsin-like substrate specificity. The sequence is that of Mast cell protease 3 (Mcpt3) from Mus musculus (Mouse).